The following is a 392-amino-acid chain: L-rhamnonate dehydratase (392 aa).

His22 and Arg48 together coordinate substrate. Mg(2+)-binding residues include Asp214, Glu240, and Glu268. The active-site Proton acceptor is the His318. Glu338 provides a ligand contact to substrate.

The protein belongs to the mandelate racemase/muconate lactonizing enzyme family. RhamD subfamily. As to quaternary structure, homooctamer; tetramer of dimers. Mg(2+) is required as a cofactor.

It catalyses the reaction L-rhamnonate = 2-dehydro-3-deoxy-L-rhamnonate + H2O. Catalyzes the dehydration of L-rhamnonate to 2-keto-3-deoxy-L-rhamnonate (KDR). In Paraburkholderia xenovorans (strain LB400), this protein is L-rhamnonate dehydratase.